The following is a 274-amino-acid chain: Cytochrome b-c1 complex subunit Rieske, mitochondrial (274 aa).

Residues Ser79–Ser103 lie on the Mitochondrial matrix side of the membrane. The helical transmembrane segment at Lys104–Met140 threads the bilayer. Over Ser141–Gly274 the chain is Mitochondrial intermembrane. The Rieske domain occupies Glu187 to Val272. [2Fe-2S] cluster contacts are provided by Cys217, His219, Cys236, His239, and Ser241. Residues Cys222 and Cys238 are joined by a disulfide bond.

The protein belongs to the Rieske iron-sulfur protein family. As to quaternary structure, component of the ubiquinol-cytochrome c oxidoreductase (cytochrome b-c1 complex, complex III, CIII), a multisubunit enzyme composed of 11 subunits. The complex is composed of 3 respiratory subunits cytochrome b, cytochrome c1 and Rieske protein UQCRFS1, 2 core protein subunits UQCRC1/QCR1 and UQCRC2/QCR2, and 6 low-molecular weight protein subunits UQCRH/QCR6, UQCRB/QCR7, UQCRQ/QCR8, UQCR10/QCR9, UQCR11/QCR10 and subunit 9, the cleavage product of Rieske protein UQCRFS1. The complex exists as an obligatory dimer and forms supercomplexes (SCs) in the inner mitochondrial membrane with NADH-ubiquinone oxidoreductase (complex I, CI) and cytochrome c oxidase (complex IV, CIV), resulting in different assemblies (supercomplex SCI(1)III(2)IV(1) and megacomplex MCI(2)III(2)IV(2)). Incorporation of the Rieske protein UQCRFS1 is the penultimate step in complex III assembly. Interacts with TTC19, which is involved in the clearance of UQCRFS1 fragments. Component of the ubiquinol-cytochrome c oxidoreductase (cytochrome b-c1 complex, complex III, CIII). Subunit 9 corresponds to the mitochondrial targeting sequence (MTS) of Rieske protein UQCRFS1. It is retained after processing and incorporated inside complex III, where it remains bound to the complex and localizes between the 2 core subunits UQCRC1/QCR1 and UQCRC2/QCR2. It depends on [2Fe-2S] cluster as a cofactor. Post-translationally, proteolytic processing is necessary for the correct insertion of UQCRFS1 in the complex III dimer. Several fragments are generated during UQCRFS1 insertion, most probably due to the endogenous matrix-processing peptidase (MPP) activity of the 2 core protein subunits UQCRC1/QCR1 and UQCRC2/QCR2, which are homologous to the 2 mitochondrial-processing peptidase (MPP) subunits beta-MPP and alpha-MPP respectively. The action of the protease is also necessary for the clearance of the UQCRFS1 fragments.

It is found in the mitochondrion inner membrane. The catalysed reaction is a quinol + 2 Fe(III)-[cytochrome c](out) = a quinone + 2 Fe(II)-[cytochrome c](out) + 2 H(+)(out). Component of the ubiquinol-cytochrome c oxidoreductase, a multisubunit transmembrane complex that is part of the mitochondrial electron transport chain which drives oxidative phosphorylation. The respiratory chain contains 3 multisubunit complexes succinate dehydrogenase (complex II, CII), ubiquinol-cytochrome c oxidoreductase (cytochrome b-c1 complex, complex III, CIII) and cytochrome c oxidase (complex IV, CIV), that cooperate to transfer electrons derived from NADH and succinate to molecular oxygen, creating an electrochemical gradient over the inner membrane that drives transmembrane transport and the ATP synthase. The cytochrome b-c1 complex catalyzes electron transfer from ubiquinol to cytochrome c, linking this redox reaction to translocation of protons across the mitochondrial inner membrane, with protons being carried across the membrane as hydrogens on the quinol. In the process called Q cycle, 2 protons are consumed from the matrix, 4 protons are released into the intermembrane space and 2 electrons are passed to cytochrome c. The Rieske protein is a catalytic core subunit containing a [2Fe-2S] iron-sulfur cluster. It cycles between 2 conformational states during catalysis to transfer electrons from the quinol bound in the Q(0) site in cytochrome b to cytochrome c1. Incorporation of UQCRFS1 is the penultimate step in complex III assembly. Its function is as follows. Component of the ubiquinol-cytochrome c oxidoreductase (cytochrome b-c1 complex, complex III, CIII). UQCRFS1 undergoes proteolytic processing once it is incorporated in the complex III dimer. One of the fragments, called subunit 9, corresponds to its mitochondrial targeting sequence (MTS). The proteolytic processing is necessary for the correct insertion of UQCRFS1 in the complex III dimer, but the persistence of UQCRFS1-derived fragments may prevent newly imported UQCRFS1 to be processed and assembled into complex III and is detrimental for the complex III structure and function. This Rattus norvegicus (Rat) protein is Cytochrome b-c1 complex subunit Rieske, mitochondrial (Uqcrfs1).